The sequence spans 417 residues: Gamma-glutamyl phosphate reductase (417 aa).

The protein belongs to the gamma-glutamyl phosphate reductase family.

The protein localises to the cytoplasm. The enzyme catalyses L-glutamate 5-semialdehyde + phosphate + NADP(+) = L-glutamyl 5-phosphate + NADPH + H(+). It functions in the pathway amino-acid biosynthesis; L-proline biosynthesis; L-glutamate 5-semialdehyde from L-glutamate: step 2/2. Its function is as follows. Catalyzes the NADPH-dependent reduction of L-glutamate 5-phosphate into L-glutamate 5-semialdehyde and phosphate. The product spontaneously undergoes cyclization to form 1-pyrroline-5-carboxylate. The protein is Gamma-glutamyl phosphate reductase of Klebsiella pneumoniae (strain 342).